The primary structure comprises 600 residues: ATP-dependent zinc metalloprotease FtsH 1 (600 aa).

Topologically, residues 1 to 8 (MKTHYFKK) are cytoplasmic. Residues 9–29 (IFNLKFLVIFFSILFCILLIL) traverse the membrane as a helical segment. The Extracellular portion of the chain corresponds to 30–130 (DLTFERRIKG…PKTDFHLSEL (101 aa)). Residues 131–151 (ILSLVPIVSSTIFMFYIISNI) traverse the membrane as a helical segment. At 152 to 600 (KKSSGKLNSN…IEQLVVNTKK (449 aa)) the chain is on the cytoplasmic side. Position 215–222 (215–222 (GPPGTGKT)) interacts with ATP. Histidine 437 contributes to the Zn(2+) binding site. Glutamate 438 is an active-site residue. Residues histidine 441 and aspartate 513 each contribute to the Zn(2+) site.

In the central section; belongs to the AAA ATPase family. The protein in the C-terminal section; belongs to the peptidase M41 family. Homohexamer. Zn(2+) is required as a cofactor.

The protein resides in the cell membrane. Functionally, acts as a processive, ATP-dependent zinc metallopeptidase for both cytoplasmic and membrane proteins. Plays a role in the quality control of integral membrane proteins. The sequence is that of ATP-dependent zinc metalloprotease FtsH 1 from Phytoplasma mali (strain AT).